Reading from the N-terminus, the 309-residue chain is UDP-N-acetylenolpyruvoylglucosamine reductase (309 aa).

One can recognise an FAD-binding PCMH-type domain in the interval 33 to 195 (VGGQAETLFR…VRARLRTRPG (163 aa)). The active site involves R175. Residue S224 is the Proton donor of the active site. E294 is a catalytic residue.

The protein belongs to the MurB family. The cofactor is FAD.

It is found in the cytoplasm. It catalyses the reaction UDP-N-acetyl-alpha-D-muramate + NADP(+) = UDP-N-acetyl-3-O-(1-carboxyvinyl)-alpha-D-glucosamine + NADPH + H(+). The protein operates within cell wall biogenesis; peptidoglycan biosynthesis. Cell wall formation. The protein is UDP-N-acetylenolpyruvoylglucosamine reductase of Granulibacter bethesdensis (strain ATCC BAA-1260 / CGDNIH1).